A 268-amino-acid polypeptide reads, in one-letter code: Esterase PIR7B (268 aa).

Residue S86 is the Acyl-ester intermediate of the active site. Residues D218 and H246 each act as charge relay system in the active site.

This sequence belongs to the AB hydrolase superfamily.

Exhibits esterase activity towards naphthol AS-acetate in vitro. In Oryza sativa subsp. japonica (Rice), this protein is Esterase PIR7B (PIR7B).